Reading from the N-terminus, the 209-residue chain is Ribosomal RNA large subunit methyltransferase E (209 aa).

Gly-63, Trp-65, Asp-83, Asp-99, and Asp-124 together coordinate S-adenosyl-L-methionine. Catalysis depends on Lys-164, which acts as the Proton acceptor.

Belongs to the class I-like SAM-binding methyltransferase superfamily. RNA methyltransferase RlmE family.

The protein resides in the cytoplasm. It catalyses the reaction uridine(2552) in 23S rRNA + S-adenosyl-L-methionine = 2'-O-methyluridine(2552) in 23S rRNA + S-adenosyl-L-homocysteine + H(+). Specifically methylates the uridine in position 2552 of 23S rRNA at the 2'-O position of the ribose in the fully assembled 50S ribosomal subunit. This Sodalis glossinidius (strain morsitans) protein is Ribosomal RNA large subunit methyltransferase E.